A 433-amino-acid polypeptide reads, in one-letter code: Protein translocase subunit SecY (433 aa).

The next 10 membrane-spanning stretches (helical) occupy residues 17–37 (IVFTILILIVCRFGSFIPIPG), 71–91 (IFALAIMPYITASIIIQLMSV), 117–137 (LTVLLASFQAYGVAISLESIV), 141–161 (GPVVILAGFFFRITTVITLVV), 184–204 (LIIFIGIISGVPSAIISMFEL), 212–232 (PLIAIAVCIGVVVLIAIIIFF), 268–288 (GVIPPIFASSILLFPATLANF), 310–330 (YILLYVALIMFFSFFYTAIVF), 366–386 (LTVIGGIYLSVICVIPELLMN), and 388–408 (YVISLSLGGTSFLIVVNVVLD).

It belongs to the SecY/SEC61-alpha family. Component of the Sec protein translocase complex. Heterotrimer consisting of SecY, SecE and SecG subunits. The heterotrimers can form oligomers, although 1 heterotrimer is thought to be able to translocate proteins. Interacts with the ribosome. Interacts with SecDF, and other proteins may be involved. Interacts with SecA.

The protein resides in the cell inner membrane. In terms of biological role, the central subunit of the protein translocation channel SecYEG. Consists of two halves formed by TMs 1-5 and 6-10. These two domains form a lateral gate at the front which open onto the bilayer between TMs 2 and 7, and are clamped together by SecE at the back. The channel is closed by both a pore ring composed of hydrophobic SecY resides and a short helix (helix 2A) on the extracellular side of the membrane which forms a plug. The plug probably moves laterally to allow the channel to open. The ring and the pore may move independently. The polypeptide is Protein translocase subunit SecY (Rickettsia conorii (strain ATCC VR-613 / Malish 7)).